Consider the following 241-residue polypeptide: tRNA pseudouridine synthase A (241 aa).

The Nucleophile role is filled by Asp51. Tyr110 is a substrate binding site.

It belongs to the tRNA pseudouridine synthase TruA family. In terms of assembly, homodimer.

The catalysed reaction is uridine(38/39/40) in tRNA = pseudouridine(38/39/40) in tRNA. In terms of biological role, formation of pseudouridine at positions 38, 39 and 40 in the anticodon stem and loop of transfer RNAs. In Campylobacter jejuni subsp. doylei (strain ATCC BAA-1458 / RM4099 / 269.97), this protein is tRNA pseudouridine synthase A.